Reading from the N-terminus, the 165-residue chain is Large ribosomal subunit protein uL10 (165 aa).

Belongs to the universal ribosomal protein uL10 family. In terms of assembly, part of the ribosomal stalk of the 50S ribosomal subunit. The N-terminus interacts with L11 and the large rRNA to form the base of the stalk. The C-terminus forms an elongated spine to which L12 dimers bind in a sequential fashion forming a multimeric L10(L12)X complex.

Forms part of the ribosomal stalk, playing a central role in the interaction of the ribosome with GTP-bound translation factors. The protein is Large ribosomal subunit protein uL10 of Sodalis glossinidius (strain morsitans).